The following is a 613-amino-acid chain: Ribosome-associated molecular chaperone SSB1 (613 aa).

The interval 1-391 (MAEGVFQGAI…ILTGQSTSED (391 aa)) is nucleotide binding domain (NBD). ATP contacts are provided by residues 16–18 (TTY), K73, 205–207 (GGT), 271–278 (ERAKRTLS), and G342. Residues 392 to 402 (TKDLLLLDVAP) are inter-domain linker. The tract at residues 403 to 613 (LSLGVGMQGD…RVVTKAMSSR (211 aa)) is substrate binding domain (SBD). The segment at 516 to 612 (SDEIEKMVNQ…KRVVTKAMSS (97 aa)) is lid domain (SBDalpha). The Nuclear export signal signature appears at 574 to 582 (IESALSDAL).

The protein belongs to the heat shock protein 70 family. Ssb-type Hsp70 subfamily. As to quaternary structure, binds to ribosomes. Binds close to the ribosomal tunnel exit via contacts with both ribosomal proteins and rRNA. Directly interacts with nascent polypeptides. This interaction is dependent on the ribosome-associated complex (RAC). Interacts with SSE1. Interacts with FES1.

The protein localises to the cytoplasm. The catalysed reaction is ATP + H2O = ADP + phosphate + H(+). Ribosome-bound, Hsp70-type chaperone that assists in the cotranslational folding of newly synthesized proteins in the cytosol. Stimulates folding by interacting with nascent chains, binding to short, largely hydrophobic sequences exposed by unfolded proteins, thereby stabilizing longer, more slowly translated, and aggregation-prone nascent polypeptides and domains that cannot fold stably until fully synthesized. The Hsp70-protein substrate interaction depends on ATP-binding and on allosteric regulation between the NBD and the SBD. The ATP-bound state is characterized by a fast exchange rate of substrate (low affinity state), while in the ADP-bound state exchange is much slower (high affinity state). During the Hsp70 cycle, the chaperone switches between the ATP-bound state (open conformation) and the ADP-bound state (closed conformation) by major conformational rearrangements involving mainly the lid domain. Ssb cooperates with a specific Hsp40/Hsp70 co-chaperone termed the ribosome-associated complex (RAC), which stimulates the ATPase activity of the ribosome-associated pool of Ssbs and switches it to the high affinity substrate binding state. Hsp110 chaperone SSE1 and FES1 act as nucleotide exchange factors that cause substrate release. The polypeptide is Ribosome-associated molecular chaperone SSB1 (SSB1) (Zygosaccharomyces rouxii (strain ATCC 2623 / CBS 732 / NBRC 1130 / NCYC 568 / NRRL Y-229)).